Here is a 231-residue protein sequence, read N- to C-terminus: Cell cycle transcriptional regulator CtrA (231 aa).

Residues 2–116 (RVLLIEDDSA…EMIARIHAVV (115 aa)) enclose the Response regulatory domain. Aspartate 51 bears the 4-aspartylphosphate mark. Positions 124 to 223 (QSVIKTGDIV…VWGRGYVLRD (100 aa)) form a DNA-binding region, ompR/PhoB-type.

Post-translationally, phosphorylated by CckA.

In terms of biological role, forms part of a two-component regulatory system CtrA/CckA that controls multiple events in the cell cycle, including cell division, stalk synthesis and cell cycle-specific transcription. Binds to a group of cell cycle-regulated promoters critical for DNA replication, DNA methylation, and class II flagellar biogenesis. This is Cell cycle transcriptional regulator CtrA (ctrA) from Caulobacter vibrioides (strain ATCC 19089 / CIP 103742 / CB 15) (Caulobacter crescentus).